A 594-amino-acid polypeptide reads, in one-letter code: Phostensin (594 aa).

Basic and acidic residues-rich tracts occupy residues 18 to 33 and 109 to 125; these read EEAAVRGREKAERDRL and VLGDRKAGPLEVLERRS. Disordered regions lie at residues 18 to 238 and 294 to 485; these read EEAA…PTDV and VQDI…GKKR. A phosphoserine mark is found at Ser-126, Ser-134, Ser-174, and Ser-194. Composition is skewed to basic and acidic residues over residues 133 to 155 and 167 to 190; these read QSPKGRESREERLSPRESRDRRL and SLRDWRQSPAEARDLSSRPAEAQK. Thr-198 is modified (phosphothreonine). Position 224 is a phosphoserine (Ser-224). A compositionally biased stretch (acidic residues) spans 353 to 364; that stretch reads EAEEEAEKEEAE. The segment covering 403–421 has biased composition (pro residues); sequence PRPPTPAPLSPPPSAPTAP. At Ser-412 the chain carries Phosphoserine. Lys-437 carries the post-translational modification N6-acetyllysine. The residue at position 510 (Ser-510) is a Phosphoserine. Residues 531–577 are disordered; sequence YQYPSESSVLEDLGPEPETPIAPLATQPDEEEEEEEEEEELLLQPGL. Positions 558 to 571 are enriched in acidic residues; it reads PDEEEEEEEEEEEL.

In terms of assembly, interacts with Protein phosphatase 1 (PP1).

The protein resides in the cytoplasm. It is found in the cytoskeleton. Its function is as follows. May target protein phosphatase 1 to F-actin cytoskeleton. This is Phostensin (Ppp1r18) from Mus musculus (Mouse).